Reading from the N-terminus, the 497-residue chain is Glycerol kinase (497 aa).

Residue threonine 13 coordinates ADP. Residues threonine 13, threonine 14, and serine 15 each contribute to the ATP site. Threonine 13 contributes to the sn-glycerol 3-phosphate binding site. Arginine 17 is a binding site for ADP. Residues arginine 83, glutamate 84, and tyrosine 135 each contribute to the sn-glycerol 3-phosphate site. Glycerol contacts are provided by arginine 83, glutamate 84, and tyrosine 135. At histidine 231 the chain carries Phosphohistidine; by HPr. Aspartate 245 is a sn-glycerol 3-phosphate binding site. Glycerol-binding residues include aspartate 245 and glutamine 246. Positions 267 and 310 each coordinate ADP. Residues threonine 267, glycine 310, glutamine 314, and glycine 411 each contribute to the ATP site. ADP contacts are provided by glycine 411 and asparagine 415.

It belongs to the FGGY kinase family. In terms of assembly, homotetramer and homodimer (in equilibrium). In terms of processing, the phosphoenolpyruvate-dependent sugar phosphotransferase system (PTS), including enzyme I, and histidine-containing protein (HPr) are required for the phosphorylation, which leads to the activation of the enzyme.

It carries out the reaction glycerol + ATP = sn-glycerol 3-phosphate + ADP + H(+). The protein operates within polyol metabolism; glycerol degradation via glycerol kinase pathway; sn-glycerol 3-phosphate from glycerol: step 1/1. With respect to regulation, activated by phosphorylation and inhibited by fructose 1,6-bisphosphate (FBP). Functionally, key enzyme in the regulation of glycerol uptake and metabolism. Catalyzes the phosphorylation of glycerol to yield sn-glycerol 3-phosphate. The protein is Glycerol kinase of Listeria innocua serovar 6a (strain ATCC BAA-680 / CLIP 11262).